The sequence spans 336 residues: TBC1 domain family member 21 (336 aa).

The 209-residue stretch at 57–265 folds into the Rab-GAP TBC domain; sequence GLHPFVRTEA…RLWEVLLTGK (209 aa).

In terms of assembly, interacts with ACTB. Interacts with ARMC12. Interacts with TOMM20 and DNAH7. Interacts with RAP1A. Interacts with RAB10. Expressed in testis, specifically in elongating and elongated spermatids (at protein level). Expressed in the sperm midpiece (at protein level).

The protein resides in the cytoplasmic vesicle. Its subcellular location is the secretory vesicle. It localises to the acrosome. The protein localises to the cytoplasm. It is found in the cytoskeleton. Functionally, acts as a GTPase-activating protein for Rab family protein (s). Essential for the establishment of male fertility, and is required for both the production of normal sperm number and sperm function. Plays an important role in the formation of intact mitochondria, outer dense fibers and axoneme within the sperm tail. Essential for sperm mitochondrial sheath formation and for the interactions of ARMC12 with VDAC2 and VDAC3. May be involved in acrosome formation and cytoskeletal reorganization during spermiogenesis, possibly by regulating RAB3A activity. This is TBC1 domain family member 21 from Mus musculus (Mouse).